A 393-amino-acid chain; its full sequence is Bifunctional enzyme IspD/IspF (393 aa).

A 2-C-methyl-D-erythritol 4-phosphate cytidylyltransferase region spans residues 1-234 (MTISQRTAAI…ARLAAQLGDI (234 aa)). The interval 235 to 393 (RTGTGYDVHA…SATIRLPWSA (159 aa)) is 2-C-methyl-D-erythritol 2,4-cyclodiphosphate synthase. A divalent metal cation is bound by residues Asp-241 and His-243. Residues 241 to 243 (DVH) and 267 to 268 (HS) contribute to the 4-CDP-2-C-methyl-D-erythritol 2-phosphate site. Position 275 (His-275) interacts with a divalent metal cation. 4-CDP-2-C-methyl-D-erythritol 2-phosphate-binding positions include 289–291 (DIG), 365–368 (TTSE), Phe-372, and Arg-375.

In the N-terminal section; belongs to the IspD/TarI cytidylyltransferase family. IspD subfamily. It in the C-terminal section; belongs to the IspF family. It depends on a divalent metal cation as a cofactor.

The catalysed reaction is 2-C-methyl-D-erythritol 4-phosphate + CTP + H(+) = 4-CDP-2-C-methyl-D-erythritol + diphosphate. The enzyme catalyses 4-CDP-2-C-methyl-D-erythritol 2-phosphate = 2-C-methyl-D-erythritol 2,4-cyclic diphosphate + CMP. The protein operates within isoprenoid biosynthesis; isopentenyl diphosphate biosynthesis via DXP pathway; isopentenyl diphosphate from 1-deoxy-D-xylulose 5-phosphate: step 2/6. It participates in isoprenoid biosynthesis; isopentenyl diphosphate biosynthesis via DXP pathway; isopentenyl diphosphate from 1-deoxy-D-xylulose 5-phosphate: step 4/6. Bifunctional enzyme that catalyzes the formation of 4-diphosphocytidyl-2-C-methyl-D-erythritol from CTP and 2-C-methyl-D-erythritol 4-phosphate (MEP) (IspD), and catalyzes the conversion of 4-diphosphocytidyl-2-C-methyl-D-erythritol 2-phosphate (CDP-ME2P) to 2-C-methyl-D-erythritol 2,4-cyclodiphosphate (ME-CPP) with a corresponding release of cytidine 5-monophosphate (CMP) (IspF). The chain is Bifunctional enzyme IspD/IspF from Bradyrhizobium sp. (strain BTAi1 / ATCC BAA-1182).